We begin with the raw amino-acid sequence, 593 residues long: Chaperone protein DnaK (593 aa).

Thr181 carries the post-translational modification Phosphothreonine; by autocatalysis.

The protein belongs to the heat shock protein 70 family.

Acts as a chaperone. The sequence is that of Chaperone protein DnaK from Mycoplasmoides gallisepticum (strain R(low / passage 15 / clone 2)) (Mycoplasma gallisepticum).